Here is a 670-residue protein sequence, read N- to C-terminus: Oligopeptidase PepF (670 aa).

Histidine 456 lines the Zn(2+) pocket. The active site involves glutamate 457. Residues histidine 460 and histidine 463 each coordinate Zn(2+).

The protein belongs to the peptidase M3B family. Zn(2+) serves as cofactor.

The protein resides in the cytoplasm. Overexpression results in inhibition of sporulation initiation. This sporulation deficiency could be the result of hydrolysis by PepF of the PhrA peptide, a phosphatase regulator. Thus, overexpression of PepF appears to act at the level of the phosphorelay, most likely through modulation of the negative role played by phosphatases. Overexpression of PepF also affects the activity of the competence and sporulation stimulating factor PhrC. This Bacillus subtilis (strain 168) protein is Oligopeptidase PepF.